The primary structure comprises 346 residues: Tetraacyldisaccharide 4'-kinase (346 aa).

54 to 61 (TVGGAGKT) provides a ligand contact to ATP.

It belongs to the LpxK family.

It catalyses the reaction a lipid A disaccharide + ATP = a lipid IVA + ADP + H(+). Its pathway is glycolipid biosynthesis; lipid IV(A) biosynthesis; lipid IV(A) from (3R)-3-hydroxytetradecanoyl-[acyl-carrier-protein] and UDP-N-acetyl-alpha-D-glucosamine: step 6/6. Its function is as follows. Transfers the gamma-phosphate of ATP to the 4'-position of a tetraacyldisaccharide 1-phosphate intermediate (termed DS-1-P) to form tetraacyldisaccharide 1,4'-bis-phosphate (lipid IVA). The protein is Tetraacyldisaccharide 4'-kinase of Sinorhizobium medicae (strain WSM419) (Ensifer medicae).